A 531-amino-acid chain; its full sequence is Efflux pump terG (531 aa).

Positions 1–11 are enriched in polar residues; the sequence is MSSSTLEGQET. The segment at 1 to 27 is disordered; it reads MSSSTLEGQETASHHSKNSPSRHGDDG. The next 13 helical transmembrane spans lie at 86–106, 117–137, 145–165, 179–199, 207–227, 249–269, 280–300, 319–339, 351–371, 380–400, 402–422, 447–467, and 488–508; these read GKLS…ILIG, AIFV…GVSV, ILAR…ALAI, FAWF…FGPL, WIYW…IVAI, IDLL…FAWN, YVYV…YVEL, FVFG…FYVI, IQMA…ALIV, ASSI…LMAL, PVHS…TFAM, SVIM…AGTI, and TLWF…IFLL.

This sequence belongs to the major facilitator superfamily.

The protein resides in the cell membrane. In terms of biological role, efflux pump that might be required for efficient secretion of terrein or other secondary metabolies produced by the terrein genne cluster. This chain is Efflux pump terG, found in Aspergillus terreus (strain NIH 2624 / FGSC A1156).